Consider the following 132-residue polypeptide: Agouti-signaling protein (132 aa).

The N-terminal stretch at 1-22 is a signal peptide; that stretch reads MDVTRLLLATLLVFLCFFTAYS. N-linked (GlcNAc...) asparagine glycosylation occurs at Asn39. The span at 61 to 79 shows a compositional bias: basic and acidic residues; that stretch reads EISRKEAEKKRSSKKEASM. The disordered stretch occupies residues 61 to 87; the sequence is EISRKEAEKKRSSKKEASMKKVARPRT. Cystine bridges form between Cys93–Cys108, Cys100–Cys114, Cys107–Cys125, Cys111–Cys132, and Cys116–Cys123. Positions 93 to 132 constitute an Agouti domain; that stretch reads CVATRDSCKPPAPACCDPCASCQCRFFRSACSCRVLSLNC.

The protein resides in the secreted. Its function is as follows. Involved in the regulation of melanogenesis. The binding of ASP to MC1R precludes alpha-MSH initiated signaling and thus blocks production of cAMP, leading to a down-regulation of eumelanogenesis (brown/black pigment) and thus increasing synthesis of pheomelanin (yellow/red pigment). This chain is Agouti-signaling protein (ASIP), found in Macaca fascicularis (Crab-eating macaque).